The chain runs to 128 residues: Translation initiation factor 5A (128 aa).

Hypusine is present on Lys-35.

It belongs to the eIF-5A family.

The protein resides in the cytoplasm. Its function is as follows. Functions by promoting the formation of the first peptide bond. This Methanosarcina acetivorans (strain ATCC 35395 / DSM 2834 / JCM 12185 / C2A) protein is Translation initiation factor 5A (eif5a).